Reading from the N-terminus, the 350-residue chain is Casein kinase II subunit alpha' (350 aa).

The Protein kinase domain occupies 40 to 325 (YQLVRKLGRG…AKEAMEHPYF (286 aa)). ATP-binding positions include 46–54 (LGRGKYSEV) and Lys-69. Asp-157 (proton acceptor) is an active-site residue.

The protein belongs to the protein kinase superfamily. Ser/Thr protein kinase family. CK2 subfamily. Tetramer composed of an alpha chain, an alpha' and two beta chains.

The catalysed reaction is L-seryl-[protein] + ATP = O-phospho-L-seryl-[protein] + ADP + H(+). It carries out the reaction L-threonyl-[protein] + ATP = O-phospho-L-threonyl-[protein] + ADP + H(+). Casein kinases are operationally defined by their preferential utilization of acidic proteins such as caseins as substrates. The alpha and alpha' chains contain the catalytic site. Participates in Wnt signaling. The polypeptide is Casein kinase II subunit alpha' (Gallus gallus (Chicken)).